A 462-amino-acid polypeptide reads, in one-letter code: MKKIAIIGKPNVGKSSLFNRILKQRDAIVSETEGTTRDVKRRIVQIGEKEAEILDTGGIEDRNELFEKVKQKSLEAAKDADIILYMVDGKKLPDEEDKQIFRSLQKLGKKIALVINKIDNDKEEENVWNFYEFGTQDIFPISVSHNRKVKRLLDWVEKQLPKKETIKIEIDEELDFDELLAINEGEKKQEESNEINVAILGRVNVGKSSLLNALLKEERSIVSDVAGTTIDTIDESTIYNDKVITFIDTAGIRRRGKIVGIEKYALNRTQKMLERADVALLVLDASEGITEQDERIAGYIDKYKLACIIVLNKWDIAKKSYEEAVKEVRDRFKFLSFAPIITLSAKTRKRVDRLYDLILKVYKNYSTWLPTGQLNRVIKEAQIRHQIPSYKGKPVKILYATQYDTKPPKIALVMNRPEGLHFSYKRYLANVLRENFDLEGTPIILRPRKRGERDEEMEEESY.

EngA-type G domains lie at 2–164 (KKIA…PKKE) and 195–366 (INVA…KNYS). Residues 8 to 15 (GKPNVGKS), 55 to 59 (DTGGI), 116 to 119 (NKID), 201 to 208 (GRVNVGKS), 248 to 252 (DTAGI), and 312 to 315 (NKWD) contribute to the GTP site. A KH-like domain is found at 367-451 (TWLPTGQLNR…PIILRPRKRG (85 aa)).

The protein belongs to the TRAFAC class TrmE-Era-EngA-EngB-Septin-like GTPase superfamily. EngA (Der) GTPase family. In terms of assembly, associates with the 50S ribosomal subunit.

Its function is as follows. GTPase that plays an essential role in the late steps of ribosome biogenesis. The protein is GTPase Der of Nitratiruptor sp. (strain SB155-2).